The following is a 365-amino-acid chain: Deoxyribonuclease-2-alpha (365 aa).

An N-terminal signal peptide occupies residues Met-1–Thr-19. Cysteines 22 and 162 form a disulfide. N-linked (GlcNAc...) asparagine glycosylation is found at Asn-215, Asn-269, and Asn-293. Cystine bridges form between Cys-270-Cys-348 and Cys-311-Cys-330. His-298 is a catalytic residue.

It belongs to the DNase II family.

The protein localises to the lysosome. The catalysed reaction is Endonucleolytic cleavage to nucleoside 3'-phosphates and 3'-phosphooligonucleotide end-products.. Its function is as follows. Hydrolyzes DNA under acidic conditions with a preference for double-stranded DNA. Plays a major role in the clearance of nucleic acids generated through apoptosis, hence preventing autoinflammation. Necessary for proper fetal development and for definitive erythropoiesis in fetal liver and bone marrow, where it degrades nuclear DNA expelled from erythroid precursor cells. The sequence is that of Deoxyribonuclease-2-alpha (DNASE2) from Bos taurus (Bovine).